The sequence spans 917 residues: Isoleucine--tRNA ligase (917 aa).

The 'HIGH' region motif lies at 57-67; that stretch reads PYANGNLHMGH. Residue glutamate 554 participates in L-isoleucyl-5'-AMP binding. The short motif at 595–599 is the 'KMSKS' region element; it reads KMSKS. Lysine 598 provides a ligand contact to ATP. Residues cysteine 886, cysteine 889, cysteine 906, and cysteine 909 each contribute to the Zn(2+) site.

Belongs to the class-I aminoacyl-tRNA synthetase family. IleS type 1 subfamily. In terms of assembly, monomer. It depends on Zn(2+) as a cofactor.

Its subcellular location is the cytoplasm. The enzyme catalyses tRNA(Ile) + L-isoleucine + ATP = L-isoleucyl-tRNA(Ile) + AMP + diphosphate. Functionally, catalyzes the attachment of isoleucine to tRNA(Ile). As IleRS can inadvertently accommodate and process structurally similar amino acids such as valine, to avoid such errors it has two additional distinct tRNA(Ile)-dependent editing activities. One activity is designated as 'pretransfer' editing and involves the hydrolysis of activated Val-AMP. The other activity is designated 'posttransfer' editing and involves deacylation of mischarged Val-tRNA(Ile). The chain is Isoleucine--tRNA ligase (ileS) from Staphylococcus aureus (strain MSSA476).